The following is a 353-amino-acid chain: Chorismate synthase (353 aa).

Arginine 48 and arginine 54 together coordinate NADP(+). Residues 125–127 (RSS), 238–239 (NA), glycine 278, 293–297 (KPTSS), and arginine 319 each bind FMN.

It belongs to the chorismate synthase family. In terms of assembly, homotetramer. The cofactor is FMNH2.

The catalysed reaction is 5-O-(1-carboxyvinyl)-3-phosphoshikimate = chorismate + phosphate. The protein operates within metabolic intermediate biosynthesis; chorismate biosynthesis; chorismate from D-erythrose 4-phosphate and phosphoenolpyruvate: step 7/7. Its function is as follows. Catalyzes the anti-1,4-elimination of the C-3 phosphate and the C-6 proR hydrogen from 5-enolpyruvylshikimate-3-phosphate (EPSP) to yield chorismate, which is the branch point compound that serves as the starting substrate for the three terminal pathways of aromatic amino acid biosynthesis. This reaction introduces a second double bond into the aromatic ring system. This is Chorismate synthase from Bordetella bronchiseptica (strain ATCC BAA-588 / NCTC 13252 / RB50) (Alcaligenes bronchisepticus).